A 164-amino-acid chain; its full sequence is MKCKPNQTRTYDPEGFKKRAACLCFRSEREDEVLLVSSSRYPDRWIVPGGGMEPEEEPGGAAVREVFEEAGVKGKLGRLLGNFEQNQDRKHRTYVYVLTVTEILEDWEDSVSIGRKREWFKVEDAIKVLQCHKPVHAEYLQKLKLGGSPTNGNSVAPSPPEGDP.

Substrate contacts are provided by residues Arg9, 17–19, and 38–40; these read KKR and SSR. Residues 17–144 form the Nudix hydrolase domain; that stretch reads KKRAACLCFR…VHAEYLQKLK (128 aa). The Mg(2+) site is built by Gly49 and Glu65. The Nudix box motif lies at 50 to 71; sequence GGMEPEEEPGGAAVREVFEEAG. The Proton acceptor role is filled by Glu68. Glu69 is a binding site for Mg(2+). Residues 89-91, Arg115, and Lys133 each bind substrate; that span reads RKH. The tract at residues 144-164 is disordered; sequence KLGGSPTNGNSVAPSPPEGDP.

Belongs to the Nudix hydrolase family. DIPP subfamily. It depends on Mg(2+) as a cofactor. Requires Mn(2+) as cofactor.

The protein resides in the cytoplasm. The enzyme catalyses diphospho-myo-inositol polyphosphate + H2O = myo-inositol polyphosphate + phosphate.. The catalysed reaction is P(1),P(6)-bis(5'-adenosyl) hexaphosphate + H2O = adenosine 5'-pentaphosphate + AMP + 2 H(+). It catalyses the reaction P(1),P(5)-bis(5'-adenosyl) pentaphosphate + H2O = adenosine 5'-tetraphosphate + AMP + 2 H(+). Functionally, cleaves a beta-phosphate from the diphosphate groups in PP-InsP5 (diphosphoinositol pentakisphosphate), suggesting that it may play a role in signal transduction. Also able to catalyze the hydrolysis of dinucleoside oligophosphates, with Ap6A and Ap5A being the preferred substrates. The major reaction products are ADP and p4a from Ap6A and ADP and ATP from Ap5A. Also able to hydrolyze 5-phosphoribose 1-diphosphate. In Bos taurus (Bovine), this protein is Diphosphoinositol polyphosphate phosphohydrolase 3-beta.